Here is a 779-residue protein sequence, read N- to C-terminus: Acyl-CoA dehydrogenase family member 11 (779 aa).

N6-acetyllysine occurs at positions 163, 166, and 175. Ser210 is modified (phosphoserine). Position 323 is a phosphotyrosine (Tyr323). 2 positions are modified to N6-succinyllysine: Lys368 and Lys390. FAD-binding positions include Phe503–Ser513, Ser511–Ser513, Trp537–Ser539, and Ser539. Ser513 is a binding site for substrate. A substrate-binding site is contributed by Gly628 to Arg631. FAD contacts are provided by residues Arg656, Gln726, and Gln726–Gly730. Position 754 (Gly754) interacts with substrate. FAD-binding positions include Pro755–Glu757 and Glu757. Lys765 is modified (N6-acetyllysine).

Belongs to the acyl-CoA dehydrogenase family. In terms of assembly, homodimer. FAD is required as a cofactor.

It localises to the peroxisome. The protein resides in the mitochondrion membrane. It carries out the reaction a 2,3-saturated acyl-CoA + oxidized [electron-transfer flavoprotein] + H(+) = a (2E)-enoyl-CoA + reduced [electron-transfer flavoprotein]. The catalysed reaction is docosanoyl-CoA + oxidized [electron-transfer flavoprotein] + H(+) = (2E)-docosenoyl-CoA + reduced [electron-transfer flavoprotein]. It catalyses the reaction tetracosanoyl-CoA + oxidized [electron-transfer flavoprotein] + H(+) = (2E)-tetracosenoyl-CoA + reduced [electron-transfer flavoprotein]. The enzyme catalyses eicosanoyl-CoA + oxidized [electron-transfer flavoprotein] + H(+) = (2E)-eicosenoyl-CoA + reduced [electron-transfer flavoprotein]. It carries out the reaction hexacosanoyl-CoA + oxidized [electron-transfer flavoprotein] + H(+) = (2E)-hexacosenoyl-CoA + reduced [electron-transfer flavoprotein]. The catalysed reaction is tricosanoyl-CoA + oxidized [electron-transfer flavoprotein] + H(+) = (2E)-tricosenoyl-CoA + reduced [electron-transfer flavoprotein]. It functions in the pathway lipid metabolism; fatty acid beta-oxidation. Functionally, acyl-CoA dehydrogenase, that exhibits maximal activity towards saturated C22-CoA. Probably participates in beta-oxydation and energy production but could also play a role in the metabolism of specific fatty acids to control fatty acids composition of cellular lipids in brain. The polypeptide is Acyl-CoA dehydrogenase family member 11 (Acad11) (Mus musculus (Mouse)).